A 582-amino-acid polypeptide reads, in one-letter code: 2-succinyl-5-enolpyruvyl-6-hydroxy-3-cyclohexene-1-carboxylate synthase (582 aa).

This sequence belongs to the TPP enzyme family. MenD subfamily. As to quaternary structure, homodimer. Mg(2+) is required as a cofactor. The cofactor is Mn(2+). It depends on thiamine diphosphate as a cofactor.

It catalyses the reaction isochorismate + 2-oxoglutarate + H(+) = 5-enolpyruvoyl-6-hydroxy-2-succinyl-cyclohex-3-ene-1-carboxylate + CO2. Its pathway is quinol/quinone metabolism; 1,4-dihydroxy-2-naphthoate biosynthesis; 1,4-dihydroxy-2-naphthoate from chorismate: step 2/7. It functions in the pathway cofactor biosynthesis; phylloquinone biosynthesis. Functionally, catalyzes the thiamine diphosphate-dependent decarboxylation of 2-oxoglutarate and the subsequent addition of the resulting succinic semialdehyde-thiamine pyrophosphate anion to isochorismate to yield 2-succinyl-5-enolpyruvyl-6-hydroxy-3-cyclohexene-1-carboxylate (SEPHCHC). The polypeptide is 2-succinyl-5-enolpyruvyl-6-hydroxy-3-cyclohexene-1-carboxylate synthase (Prochlorococcus marinus (strain MIT 9313)).